A 494-amino-acid chain; its full sequence is Transcriptional regulator of yeast form adherence 3 (494 aa).

An SPX domain is found at 1–360; sequence MKFAKTLERT…SLGIQKTFPK (360 aa). An RING-type zinc finger spans residues 398-437; sequence CPICMNIAYKPIRLSCGHLFCVRCLVKMKQDDKTSCPLCR.

The protein localises to the nucleus. Functionally, transcription factor required for yeast cell adherence to silicone substrate. The polypeptide is Transcriptional regulator of yeast form adherence 3 (TRY3) (Candida albicans (strain SC5314 / ATCC MYA-2876) (Yeast)).